The primary structure comprises 144 residues: Large ribosomal subunit protein uL15 (144 aa).

Residues 1–52 are disordered; sequence MRLNSLSPAEGAKHSAKRLGRGISSGLGKTGGRGHKGQKSRTGGGVRRGFEG.

It belongs to the universal ribosomal protein uL15 family. As to quaternary structure, part of the 50S ribosomal subunit.

Functionally, binds to the 23S rRNA. This is Large ribosomal subunit protein uL15 from Actinobacillus pleuropneumoniae serotype 7 (strain AP76).